We begin with the raw amino-acid sequence, 331 residues long: MTTGPFVPNPTIDPKSLGKVGVLMGGRSAEREISLMSGNGVLAALRARGVDAHAFDPGLQAVADLAKQGFDRVVISLHGRFGEDGTIQGLLEQFGIPYTGSGVLASALAMDKEATKRQWQTHGLPTPDFVMLHAGADWQAVADRLGLPLIVKPAREGSSIGLTKVTSVAELPAAYEKAARLDRDVMAEQFIEGDELTCPIIGEGESATALPLIRIVAPQANYDYQNKYFTDDTRYECPAPIPADVAARVQALVVQAYRGLGCRGWGRADIMLRKSDNAPFLLEMNTSPGMTGHSLVPMGARAAGISYEDFVLQLAASASLELHASTDWKPE.

The ATP-grasp domain occupies 116 to 316; it reads KRQWQTHGLP…YEDFVLQLAA (201 aa). 142 to 197 serves as a coordination point for ATP; it reads ADRLGLPLIVKPAREGSSIGLTKVTSVAELPAAYEKAARLDRDVMAEQFIEGDELT. Residues aspartate 269, glutamate 283, and asparagine 285 each coordinate Mg(2+).

Belongs to the D-alanine--D-alanine ligase family. The cofactor is Mg(2+). Mn(2+) serves as cofactor.

It is found in the cytoplasm. It carries out the reaction 2 D-alanine + ATP = D-alanyl-D-alanine + ADP + phosphate + H(+). It participates in cell wall biogenesis; peptidoglycan biosynthesis. In terms of biological role, cell wall formation. This is D-alanine--D-alanine ligase from Ralstonia pickettii (strain 12J).